The sequence spans 860 residues: Leucine--tRNA ligase (860 aa).

The 'HIGH' region motif lies at 42–52 (PYPSGRLHMGH). The 'KMSKS' region signature appears at 619–623 (KMSKS). Residue K622 participates in ATP binding.

Belongs to the class-I aminoacyl-tRNA synthetase family.

Its subcellular location is the cytoplasm. It carries out the reaction tRNA(Leu) + L-leucine + ATP = L-leucyl-tRNA(Leu) + AMP + diphosphate. This is Leucine--tRNA ligase from Escherichia coli (strain 55989 / EAEC).